The following is a 143-amino-acid chain: Sec-independent protein translocase protein TatB (143 aa).

The helical transmembrane segment at 2–22 (FGNIGWGEFMVLLVAALVILG) threads the bilayer. Positions 97–143 (FDKPGSVSFDKSNPGTKAVSADPSTPTAPQNKPLAAGERPPIDLDAT) are disordered.

Belongs to the TatB family. The Tat system comprises two distinct complexes: a TatABC complex, containing multiple copies of TatA, TatB and TatC subunits, and a separate TatA complex, containing only TatA subunits. Substrates initially bind to the TatABC complex, which probably triggers association of the separate TatA complex to form the active translocon.

It is found in the cell membrane. Functionally, part of the twin-arginine translocation (Tat) system that transports large folded proteins containing a characteristic twin-arginine motif in their signal peptide across membranes. Together with TatC, TatB is part of a receptor directly interacting with Tat signal peptides. TatB may form an oligomeric binding site that transiently accommodates folded Tat precursor proteins before their translocation. The chain is Sec-independent protein translocase protein TatB from Rhodococcus opacus (strain B4).